The chain runs to 81 residues: MKKRFFIFLTPDGMTYSSCEGIYPDVDNLQVLGWAEGLTKEDAFEEFLRVNRWVLDTNFKEVICVEARTRIHEGKLFLLKK.

This is an uncharacterized protein from Archaeoglobus fulgidus (strain ATCC 49558 / DSM 4304 / JCM 9628 / NBRC 100126 / VC-16).